Reading from the N-terminus, the 871-residue chain is Transient receptor potential cation channel subfamily V member 4 (871 aa).

Residues 1–68 (MADSSEGPRA…GPGDGRPNLR (68 aa)) are disordered. Residues 1-469 (MADSSEGPRA…RDKWRKFGAV (469 aa)) are Cytoplasmic-facing. Phosphotyrosine is present on Y110. ATP is bound by residues K192, K197, N201, 236–239 (YRGQ), and R248. 2 ANK repeats span residues 237–266 (RGQT…DVHA) and 284–313 (FGEL…KKAD). An a 1,2-diacyl-sn-glycero-3-phospho-(1D-myo-inositol-4,5-bisphosphate)-binding site is contributed by 249 to 251 (RCK). The residue at position 253 (Y253) is a Phosphotyrosine. Residues 296-299 (NQPH) and K344 contribute to the a 1,2-diacyl-sn-glycero-3-phospho-(1D-myo-inositol-4,5-bisphosphate) site. Residues 369-398 (DGLSPLMMAAKTGKIGIFQHIIRREVTDED) form an ANK 3 repeat. The chain crosses the membrane as a helical span at residues 470-490 (SFYINVVSYLCAMVIFTLTAY). Residues 491–507 (YQPLEGTPPYPYRTTVD) are Extracellular-facing. The helical transmembrane segment at 508–534 (YLRLAGEVITLFTGVLFFFTNIKDLFM) threads the bilayer. At 535–547 (KKCPGVNSLFIDG) the chain is on the cytoplasmic side. A helical membrane pass occupies residues 548-568 (SFQLLYFIYSVLVIVSAALYL). The Extracellular portion of the chain corresponds to 569–572 (AGIE). The helical transmembrane segment at 573-593 (AYLAVMVFALVLGWMNALYFT) threads the bilayer. Topologically, residues 594-608 (RGLKLTGTYSIMIQK) are cytoplasmic. The helical transmembrane segment at 609 to 636 (ILFKDLFRFLLVYLLFMIGYASALVSLL) threads the bilayer. The Extracellular segment spans residues 637-665 (NPCANMKVCNEDQTNCTVPTYPSCRDSET). An intramembrane region (pore-forming) is located at residues 666–685 (FSTFLLDLFKLTIGMGDLEM). The short motif at 679-682 (GMGD) is the Selectivity filter element. A Ca(2+)-binding site is contributed by D682. Over 686–693 (LSSTKYPV) the chain is Extracellular. A helical transmembrane segment spans residues 694–722 (VFIILLVTYIILTFVLLLNMLIALMGETV). Over 723–871 (GQVSKESKHI…RKWRTDDAPL (149 aa)) the chain is Cytoplasmic. Position 805 is a phosphotyrosine (Y805). Residues 812–831 (HTVGRLRRDRWSSVVPRVVE) are interaction with calmodulin and ITPR3. At S824 the chain carries Phosphoserine. Positions 849–871 (GNPRCDGHQQGYPRKWRTDDAPL) are disordered.

The protein belongs to the transient receptor (TC 1.A.4) family. TrpV subfamily. TRPV4 sub-subfamily. In terms of assembly, homotetramer. Self-associates in an isoform-specific manner. Isoform 1 and isoform 5 can oligomerize, but isoform 2, isoform 4 and isoform 6 cannot oligomerize. Interacts with calmodulin. Interacts with Map7 and Src family Tyr protein kinases LYN, SRC, FYN, HCK, LCK and YES. Interacts with CTNNB1. The TRPV4 and CTNNB1 complex can interact with CDH1. Interacts with PACSIN1, PACSIN2 and PACSIN3 (via SH3 domain). Part of a complex containing MLC1, AQP4, HEPACAM and ATP1B1. Interacts with ITPR3. Interacts with AQP5; the interaction is probably indirect and regulates TRPV4 activation by hypotonicity. Interacts with ANO1. Interacts (via C-terminus) with PKD2 (via C-terminus). Interacts with DDX3X; this interaction is decreased when the channel is activated. N-glycosylated. As to expression, found in the synoviocytes from patients with (RA) and without (CTR) rheumatoid arthritis (at protein level).

It localises to the cell membrane. The protein resides in the apical cell membrane. It is found in the cell junction. Its subcellular location is the adherens junction. The protein localises to the cell projection. It localises to the cilium. The protein resides in the endoplasmic reticulum. The enzyme catalyses Ca(2+)(in) = Ca(2+)(out). With respect to regulation, channel activation is inhibited by binding to phosphatidylinositol-4,5-bisphosphate, and to a much lesser degree by phosphatidylinositol-3,4,5-trisphosphate. Not inhibited by phosphatidylinositol-3,4-bisphosphate and phosphatidylinositol-3,5-bisphosphate. Functionally, non-selective calcium permeant cation channel involved in osmotic sensitivity and mechanosensitivity. Activation by exposure to hypotonicity within the physiological range exhibits an outward rectification. Also activated by heat, low pH, citrate and phorbol esters. Increase of intracellular Ca(2+) potentiates currents. Channel activity seems to be regulated by a calmodulin-dependent mechanism with a negative feedback mechanism. Promotes cell-cell junction formation in skin keratinocytes and plays an important role in the formation and/or maintenance of functional intercellular barriers. Acts as a regulator of intracellular Ca(2+) in synoviocytes. Plays an obligatory role as a molecular component in the nonselective cation channel activation induced by 4-alpha-phorbol 12,13-didecanoate and hypotonic stimulation in synoviocytes and also regulates production of IL-8. Together with PKD2, forms mechano- and thermosensitive channels in cilium. Negatively regulates expression of PPARGC1A, UCP1, oxidative metabolism and respiration in adipocytes. Regulates expression of chemokines and cytokines related to pro-inflammatory pathway in adipocytes. Together with AQP5, controls regulatory volume decrease in salivary epithelial cells. Required for normal development and maintenance of bone and cartilage. In its inactive state, may sequester DDX3X at the plasma membrane. When activated, the interaction between both proteins is affected and DDX3X relocalizes to the nucleus. In neurons of the central nervous system, could play a role in triggering voluntary water intake in response to increased sodium concentration in body fluid. Non-selective calcium permeant cation channel involved in osmotic sensitivity and mechanosensitivity. Activation by exposure to hypotonicity within the physiological range exhibits an outward rectification. Also activated by phorbol esters. Has the same channel activity as isoform 1, and is activated by the same stimuli. Its function is as follows. Lacks channel activity, due to impaired oligomerization and intracellular retention. In terms of biological role, (Microbial infection) Facilitates hepatitis C virus (HCV) replication, possibly through its action on DDX3X. Functionally, (Microbial infection) Facilitates Dengue virus (DENV) replication, possibly through its action on DDX3X. (Microbial infection) Facilitates Zika virus (ZIKV) replication, possibly through its action on DDX3X. The protein is Transient receptor potential cation channel subfamily V member 4 (TRPV4) of Homo sapiens (Human).